The chain runs to 151 residues: MFRGANAVSLDAKGRLAMPSRYRDELDSRCNGQLIVTIDAVDPCLCVYPLDEWEQIEAKLRALPSLREENRRLQRLLIGNAVDLELDGSGRFLVPPRLREYAKLDKKAMLVGQLNKFQLWDEDAWNAVSAADLAAIQQPGAMPDDLRDLIL.

2 consecutive SpoVT-AbrB domains span residues 5–52 and 81–124; these read ANAV…PLDE and AVDL…DEDA.

The protein belongs to the MraZ family. In terms of assembly, forms oligomers.

The protein resides in the cytoplasm. The protein localises to the nucleoid. The polypeptide is Transcriptional regulator MraZ (Pseudomonas putida (strain W619)).